The primary structure comprises 500 residues: Probable cytosol aminopeptidase (500 aa).

Residues Lys-264 and Asp-269 each contribute to the Mn(2+) site. Lys-276 is an active-site residue. Mn(2+) is bound by residues Asp-287, Asp-346, and Glu-348. Residue Arg-350 is part of the active site.

This sequence belongs to the peptidase M17 family. The cofactor is Mn(2+).

The protein localises to the cytoplasm. It catalyses the reaction Release of an N-terminal amino acid, Xaa-|-Yaa-, in which Xaa is preferably Leu, but may be other amino acids including Pro although not Arg or Lys, and Yaa may be Pro. Amino acid amides and methyl esters are also readily hydrolyzed, but rates on arylamides are exceedingly low.. It carries out the reaction Release of an N-terminal amino acid, preferentially leucine, but not glutamic or aspartic acids.. Presumably involved in the processing and regular turnover of intracellular proteins. Catalyzes the removal of unsubstituted N-terminal amino acids from various peptides. The chain is Probable cytosol aminopeptidase from Afipia carboxidovorans (strain ATCC 49405 / DSM 1227 / KCTC 32145 / OM5) (Oligotropha carboxidovorans).